The following is a 79-amino-acid chain: Acyl carrier protein (79 aa).

The Carrier domain maps to 2–77 (SDIGERVKKI…DATKFLEKNA (76 aa)). Ser-37 is subject to O-(pantetheine 4'-phosphoryl)serine.

It belongs to the acyl carrier protein (ACP) family. 4'-phosphopantetheine is transferred from CoA to a specific serine of apo-ACP by AcpS. This modification is essential for activity because fatty acids are bound in thioester linkage to the sulfhydryl of the prosthetic group.

It is found in the cytoplasm. The protein operates within lipid metabolism; fatty acid biosynthesis. Functionally, carrier of the growing fatty acid chain in fatty acid biosynthesis. The protein is Acyl carrier protein of Bradyrhizobium diazoefficiens (strain JCM 10833 / BCRC 13528 / IAM 13628 / NBRC 14792 / USDA 110).